A 242-amino-acid chain; its full sequence is MALVLPLLPLLLSKVQGNPEVSLEGSPGDRVNLSCIGVSDPTRWAWAPSFPACKGLSKGRRPILWASTRGTPTVLQHFSGRLRSLDNGIKRLELLLSAGDSGTFFCKGRHENESRTVLQVLGDKAGCRPAGSTHGYEYPKVLIPLLGVGLVLGLGVAGVVWRRRRLSPPPPPPPPPGPLPTFAPVINAEPQRPLEQESKISGHLDQEPSLHYADLDHSVLGRHRRMSTVVSGDASTVYAVVV.

Positions 1 to 17 are cleaved as a signal peptide; sequence MALVLPLLPLLLSKVQG. N-linked (GlcNAc...) asparagine glycosylation is found at asparagine 32 and asparagine 112. A helical transmembrane segment spans residues 141–161; it reads VLIPLLGVGLVLGLGVAGVVW. Short sequence motifs (ITIM motif) lie at residues 210 to 215 and 236 to 241; these read LHYADL and TVYAVV. Tyrosine 212 bears the Phosphotyrosine mark.

Interacts (via ITIM motif) with PTPN6 and PTPN11. Binds to heparin. N-glycosylated. Post-translationally, may be O-glycosylated. In terms of processing, phosphorylated. In terms of tissue distribution, expressed in mature megakaryocytes and platelets. Not expressed by immature megakaryocytes.

It localises to the cell membrane. Inhibitory receptor that acts as a critical regulator of hematopoietic lineage differentiation, megakaryocyte function and platelet production. Inhibits platelet aggregation and activation by agonists such as ADP and collagen-related peptide. This regulation of megakaryocate function as well as platelet production ann activation is done through the inhibition (via the 2 ITIM motifs) of the receptors CLEC1B and GP6:FcRgamma signaling. Appears to operate in a calcium-independent manner. This is Megakaryocyte and platelet inhibitory receptor G6b from Mus musculus (Mouse).